We begin with the raw amino-acid sequence, 399 residues long: Probable peptidoglycan glycosyltransferase FtsW (399 aa).

At 1–25 (MTAAAPSKPLPRTPRVRQAYPLDYP) the chain is on the cytoplasmic side. A helical membrane pass occupies residues 26 to 46 (LLLCALGLLAFGWVMVTSASM). At 47–64 (SIAEACCQNPFHYSIRHA) the chain is on the periplasmic side. The helical transmembrane segment at 65 to 85 (IALGLALMLGLMAYSVPSHWW) threads the bilayer. Topologically, residues 86 to 88 (ERH) are cytoplasmic. Residues 89–109 (GVWLFLASALVLILVLIPGIG) traverse the membrane as a helical segment. At 110–117 (RTVNGATR) the chain is on the periplasmic side. A helical transmembrane segment spans residues 118 to 138 (WIPLGPLNVQPSEFVKLFAIL). Topologically, residues 139–153 (YVAGYLVRHADKVVN) are cytoplasmic. A helical transmembrane segment spans residues 154–174 (QLSGFIRPLILIGAAALLILM). At 175 to 177 (QPD) the chain is on the periplasmic side. 2 helical membrane-spanning segments follow: residues 178–198 (FGTT…GGAS) and 199–219 (LLPF…LVIF). Residues 220-281 (SPYRLERVVS…PEAHTDFLPS (62 aa)) are Periplasmic-facing. Residues 282–302 (VIGEELGLAGMLVLIAAFVFL) traverse the membrane as a helical segment. The Cytoplasmic segment spans residues 303–326 (SWRAMSIGVRAEALKRPFESYVAQ). Residues 327 to 347 (GIGLWIGLQSFVNLGVNVGIL) traverse the membrane as a helical segment. Over 348-353 (PTKGLT) the chain is Periplasmic. A helical membrane pass occupies residues 354–374 (LPFMSYGSNSLMVGCMAVAIL). Over 375–399 (LRIDVMLRRVESEAKFKRGTPWSRA) the chain is Cytoplasmic.

The protein belongs to the SEDS family. FtsW subfamily.

The protein localises to the cell inner membrane. It carries out the reaction [GlcNAc-(1-&gt;4)-Mur2Ac(oyl-L-Ala-gamma-D-Glu-L-Lys-D-Ala-D-Ala)](n)-di-trans,octa-cis-undecaprenyl diphosphate + beta-D-GlcNAc-(1-&gt;4)-Mur2Ac(oyl-L-Ala-gamma-D-Glu-L-Lys-D-Ala-D-Ala)-di-trans,octa-cis-undecaprenyl diphosphate = [GlcNAc-(1-&gt;4)-Mur2Ac(oyl-L-Ala-gamma-D-Glu-L-Lys-D-Ala-D-Ala)](n+1)-di-trans,octa-cis-undecaprenyl diphosphate + di-trans,octa-cis-undecaprenyl diphosphate + H(+). It functions in the pathway cell wall biogenesis; peptidoglycan biosynthesis. Functionally, peptidoglycan polymerase that is essential for cell division. This Allochromatium vinosum (strain ATCC 17899 / DSM 180 / NBRC 103801 / NCIMB 10441 / D) (Chromatium vinosum) protein is Probable peptidoglycan glycosyltransferase FtsW.